The following is a 249-amino-acid chain: Purine nucleoside phosphorylase ML0918 (249 aa).

Residues His72, Cys109, and His126 each coordinate Zn(2+).

The protein belongs to the purine nucleoside phosphorylase YfiH/LACC1 family. In terms of assembly, homodimer. Requires Cu(2+) as cofactor. Zn(2+) is required as a cofactor.

It carries out the reaction adenosine + phosphate = alpha-D-ribose 1-phosphate + adenine. The catalysed reaction is S-methyl-5'-thioadenosine + phosphate = 5-(methylsulfanyl)-alpha-D-ribose 1-phosphate + adenine. The enzyme catalyses inosine + phosphate = alpha-D-ribose 1-phosphate + hypoxanthine. It catalyses the reaction adenosine + H2O + H(+) = inosine + NH4(+). Functionally, purine nucleoside enzyme that catalyzes the phosphorolysis of adenosine and inosine nucleosides, yielding D-ribose 1-phosphate and the respective free bases, adenine and hypoxanthine. Also catalyzes the phosphorolysis of S-methyl-5'-thioadenosine into adenine and S-methyl-5-thio-alpha-D-ribose 1-phosphate. Also has adenosine deaminase activity. In Mycobacterium leprae (strain TN), this protein is Purine nucleoside phosphorylase ML0918.